Reading from the N-terminus, the 312-residue chain is Protein-glutamate methylesterase/protein-glutamine glutaminase (312 aa).

The 118-residue stretch at 5–122 (RVLSVDDSAL…REGMLAYSEM (118 aa)) folds into the Response regulatory domain. At aspartate 56 the chain carries 4-aspartylphosphate. Residues 152–307 (LLSSEKLIAI…QQMLAKISAG (156 aa)) form the CheB-type methylesterase domain. Catalysis depends on residues serine 164, histidine 190, and aspartate 249.

Belongs to the CheB family. Phosphorylated by CheA. Phosphorylation of the N-terminal regulatory domain activates the methylesterase activity.

The protein localises to the cytoplasm. It catalyses the reaction [protein]-L-glutamate 5-O-methyl ester + H2O = L-glutamyl-[protein] + methanol + H(+). It carries out the reaction L-glutaminyl-[protein] + H2O = L-glutamyl-[protein] + NH4(+). Its function is as follows. Involved in chemotaxis. Part of a chemotaxis signal transduction system that modulates chemotaxis in response to various stimuli. Catalyzes the demethylation of specific methylglutamate residues introduced into the chemoreceptors (methyl-accepting chemotaxis proteins or MCP) by CheR. Also mediates the irreversible deamidation of specific glutamine residues to glutamic acid. This chain is Protein-glutamate methylesterase/protein-glutamine glutaminase, found in Shigella boydii serotype 4 (strain Sb227).